Reading from the N-terminus, the 492-residue chain is Dynein regulatory complex subunit 2 (492 aa).

Coiled coils occupy residues 16–95, 256–318, and 373–401; these read LTEE…FERV, VQSA…AAQA, and LSEEEQKQEKAKAMESSNEKLTQLMHDYS.

The protein belongs to the DRC2 family. Component of the nexin-dynein regulatory complex (N-DRC).

It localises to the cytoplasm. The protein resides in the cytoskeleton. The protein localises to the flagellum basal body. It is found in the cell projection. Its subcellular location is the cilium. It localises to the flagellum. The protein resides in the flagellum axoneme. In terms of biological role, component of the nexin-dynein regulatory complex (N-DRC), a key regulator of ciliary/flagellar motility which maintains the alignment and integrity of the distal axoneme and regulates microtubule sliding in motile axonemes. Plays a critical role in the assembly of N-DRC and also stabilizes the assembly of multiple inner dynein arms and radial spokes. Coassembles with DRC1 to form a central scaffold needed for assembly of the N-DRC and its attachment to the outer doublet microtubules. This chain is Dynein regulatory complex subunit 2 (ccdc65), found in Danio rerio (Zebrafish).